The sequence spans 418 residues: Pyrophosphate--fructose 6-phosphate 1-phosphotransferase (418 aa).

G13 is a diphosphate binding site. N111 provides a ligand contact to Mg(2+). Substrate-binding positions include 139-141 (TID), 187-189 (MGR), E244, and 295-298 (YLQR). The Proton acceptor role is filled by D141.

This sequence belongs to the phosphofructokinase type A (PFKA) family. PPi-dependent PFK group II subfamily. Clade 'B2' sub-subfamily. In terms of assembly, homodimer. The cofactor is Mg(2+).

The protein localises to the cytoplasm. It catalyses the reaction beta-D-fructose 6-phosphate + diphosphate = beta-D-fructose 1,6-bisphosphate + phosphate + H(+). It participates in carbohydrate degradation; glycolysis; D-glyceraldehyde 3-phosphate and glycerone phosphate from D-glucose: step 3/4. With respect to regulation, non-allosteric. In terms of biological role, catalyzes the phosphorylation of D-fructose 6-phosphate, the first committing step of glycolysis. Uses inorganic phosphate (PPi) as phosphoryl donor instead of ATP like common ATP-dependent phosphofructokinases (ATP-PFKs), which renders the reaction reversible, and can thus function both in glycolysis and gluconeogenesis. Consistently, PPi-PFK can replace the enzymes of both the forward (ATP-PFK) and reverse (fructose-bisphosphatase (FBPase)) reactions. In Xanthomonas campestris pv. campestris (strain B100), this protein is Pyrophosphate--fructose 6-phosphate 1-phosphotransferase.